Here is a 378-residue protein sequence, read N- to C-terminus: Chlorophyll synthase, chloroplastic (378 aa).

The transit peptide at 1–45 directs the protein to the chloroplast; sequence MATSHPLAAAAATSSSSATFRPPLRFLSSPPSSLTLNRRRSFPVV. 7 consecutive transmembrane segments (helical) span residues 173-193, 199-219, 232-252, 257-277, 302-322, 327-347, and 357-377; these read VITQ…LLDI, FPII…YSAP, FALG…LFGT, IVVL…VNDF, WICV…LLST, YALA…QYFL, and YQAS…LATS.

Belongs to the UbiA prenyltransferase family. Chlorophyll synthase subfamily. It depends on Mg(2+) as a cofactor. Zn(2+) serves as cofactor. Requires Mn(2+) as cofactor.

The protein localises to the plastid. The protein resides in the chloroplast membrane. It carries out the reaction phytyl diphosphate + chlorophyllide a + H(+) = chlorophyll a + diphosphate. With respect to regulation, inhibited by N-phenylmaleimide (NPM) and diacetyl. In terms of biological role, involved in one of the last steps of the biosynthesis of chlorophyll a. Catalyzes the esterification of chlorophillide a with either geranylgeranyldiphosphate (GGPP) or phytyldiphosphate (PhyPP). May also use with a lower efficiency the monophosphates GGMP and PhyMP, but not the non-phosphorylated alcohols geranylgeraniol and phytol. The tetraprenyl diphosphate must bind to the enzyme as the first substrate and esterification occurs when this pre-loaded enzyme meets the second substrate, chlorophyllide. The polypeptide is Chlorophyll synthase, chloroplastic (CHLG) (Avena sativa (Oat)).